The sequence spans 368 residues: tRNA-specific 2-thiouridylase MnmA (368 aa).

Residues 11 to 18 (GMSGGVDS) and Met37 each bind ATP. The tract at residues 97–99 (NPD) is interaction with target base in tRNA. Cys102 acts as the Nucleophile in catalysis. Cys102 and Cys199 are oxidised to a cystine. Gly127 contacts ATP. Residues 149–151 (KDQ) form an interaction with tRNA region. The active-site Cysteine persulfide intermediate is the Cys199. Residues 311-312 (RY) are interaction with tRNA.

The protein belongs to the MnmA/TRMU family. In terms of assembly, interacts with TusE.

It localises to the cytoplasm. The enzyme catalyses S-sulfanyl-L-cysteinyl-[protein] + uridine(34) in tRNA + AH2 + ATP = 2-thiouridine(34) in tRNA + L-cysteinyl-[protein] + A + AMP + diphosphate + H(+). Functionally, catalyzes the 2-thiolation of uridine at the wobble position (U34) of tRNA(Lys), tRNA(Glu) and tRNA(Gln), leading to the formation of s(2)U34, the first step of tRNA-mnm(5)s(2)U34 synthesis. Sulfur is provided by IscS, via a sulfur-relay system. Binds ATP and its substrate tRNAs. The polypeptide is tRNA-specific 2-thiouridylase MnmA (Salmonella arizonae (strain ATCC BAA-731 / CDC346-86 / RSK2980)).